The following is a 252-amino-acid chain: 2-succinyl-6-hydroxy-2,4-cyclohexadiene-1-carboxylate synthase (252 aa).

The protein belongs to the AB hydrolase superfamily. MenH family. In terms of assembly, monomer.

The enzyme catalyses 5-enolpyruvoyl-6-hydroxy-2-succinyl-cyclohex-3-ene-1-carboxylate = (1R,6R)-6-hydroxy-2-succinyl-cyclohexa-2,4-diene-1-carboxylate + pyruvate. Its pathway is quinol/quinone metabolism; 1,4-dihydroxy-2-naphthoate biosynthesis; 1,4-dihydroxy-2-naphthoate from chorismate: step 3/7. The protein operates within quinol/quinone metabolism; menaquinone biosynthesis. Functionally, catalyzes a proton abstraction reaction that results in 2,5-elimination of pyruvate from 2-succinyl-5-enolpyruvyl-6-hydroxy-3-cyclohexene-1-carboxylate (SEPHCHC) and the formation of 2-succinyl-6-hydroxy-2,4-cyclohexadiene-1-carboxylate (SHCHC). The polypeptide is 2-succinyl-6-hydroxy-2,4-cyclohexadiene-1-carboxylate synthase (Salmonella newport (strain SL254)).